The sequence spans 259 residues: Type III pantothenate kinase (259 aa).

6-13 contributes to the ATP binding site; it reads DCGNTNTV. 107-110 contributes to the substrate binding site; that stretch reads GPDR. Asp109 acts as the Proton acceptor in catalysis. Asp129 is a binding site for K(+). ATP is bound at residue Thr132. Thr184 is a binding site for substrate.

Belongs to the type III pantothenate kinase family. As to quaternary structure, homodimer. NH4(+) serves as cofactor. The cofactor is K(+).

Its subcellular location is the cytoplasm. It carries out the reaction (R)-pantothenate + ATP = (R)-4'-phosphopantothenate + ADP + H(+). Its pathway is cofactor biosynthesis; coenzyme A biosynthesis; CoA from (R)-pantothenate: step 1/5. Its function is as follows. Catalyzes the phosphorylation of pantothenate (Pan), the first step in CoA biosynthesis. The chain is Type III pantothenate kinase from Jannaschia sp. (strain CCS1).